Here is a 146-residue protein sequence, read N- to C-terminus: Ribonuclease H (146 aa).

The RNase H type-1 domain occupies 4–145; that stretch reads ELNKVVIYTD…ADMLARSQIV (142 aa). 4 residues coordinate Mg(2+): Asp13, Glu51, Asp73, and Asp137.

This sequence belongs to the RNase H family. In terms of assembly, monomer. Mg(2+) serves as cofactor.

It localises to the cytoplasm. It carries out the reaction Endonucleolytic cleavage to 5'-phosphomonoester.. In terms of biological role, endonuclease that specifically degrades the RNA of RNA-DNA hybrids. The polypeptide is Ribonuclease H (Ehrlichia chaffeensis (strain ATCC CRL-10679 / Arkansas)).